The primary structure comprises 655 residues: D-xylonate dehydratase YjhG (655 aa).

This sequence belongs to the IlvD/Edd family.

The enzyme catalyses D-xylonate = 2-dehydro-3-deoxy-D-arabinonate + H2O. Its activity is regulated as follows. Activity is increased in the presence of Mn(+) and Mg(2+). Inhibited by thiol compounds. In terms of biological role, catalyzes the dehydration of D-xylonic acid to form 2-dehydro-3-deoxy-D-pentonate. This chain is D-xylonate dehydratase YjhG (yjhG), found in Escherichia coli (strain K12).